Reading from the N-terminus, the 464-residue chain is 3-deoxy-D-manno-octulosonic acid transferase (464 aa).

The chain crosses the membrane as a helical; Signal-anchor span at residues 2–22 (MLLYYALSFILLPVYFIIILI). Residues 47–93 (DSLDFMQTSANKEEFKGDTSLRTTTYTLIREDEGLGSTYKLPLEASD) form the RPE1 insert domain. Residue glutamate 107 is the Proton acceptor of the active site. Residues 311–312 (PR), 352–354 (FGE), and 377–380 (NILE) each bind CMP.

Belongs to the glycosyltransferase group 1 family. Glycosyltransferase 30 subfamily.

It is found in the cell inner membrane. The catalysed reaction is lipid IVA (E. coli) + CMP-3-deoxy-beta-D-manno-octulosonate = alpha-Kdo-(2-&gt;6)-lipid IVA (E. coli) + CMP + H(+). The protein operates within bacterial outer membrane biogenesis; LPS core biosynthesis. Functionally, involved in lipopolysaccharide (LPS) biosynthesis. Catalyzes the transfer of 3-deoxy-D-manno-octulosonate (Kdo) residue(s) from CMP-Kdo to lipid IV(A), the tetraacyldisaccharide-1,4'-bisphosphate precursor of lipid A. This Rickettsia conorii (strain ATCC VR-613 / Malish 7) protein is 3-deoxy-D-manno-octulosonic acid transferase (waaA).